The primary structure comprises 247 residues: MNVLPCSMNTLKGLYEISGVEVGQHFYWQIGGFQIHAQVLITSWVVIAILLGSAAIAVRNPQTIPTDGQNFFEYVLEFIRDLSKTQIGEDYGPWVPFIGTMFLFIFVSNWSGALLPWKIIQLPHGELAAPTNDINTTVALALLTSAAYFYAGLTKKGLGYFGKYIQPTPILLPINILEDFTKPLSLSFRLFGNILADELVVVVLVSLVPLVVPIPVMFLGLFTSGIQALIFATLAAAYIGESMEGHH.

Helical transmembrane passes span 38 to 58 (QVLI…AIAV), 95 to 115 (VPFI…GALL), 134 to 154 (INTT…AGLT), 199 to 219 (LVVV…VMFL), and 220 to 240 (GLFT…AYIG).

The protein belongs to the ATPase A chain family. In terms of assembly, F-type ATPases have 2 components, CF(1) - the catalytic core - and CF(0) - the membrane proton channel. CF(1) has five subunits: alpha(3), beta(3), gamma(1), delta(1), epsilon(1). CF(0) has four main subunits: a, b, b' and c.

It is found in the plastid. The protein localises to the chloroplast thylakoid membrane. In terms of biological role, key component of the proton channel; it plays a direct role in the translocation of protons across the membrane. In Ceratophyllum demersum (Rigid hornwort), this protein is ATP synthase subunit a, chloroplastic.